We begin with the raw amino-acid sequence, 626 residues long: MLLKVSSCEPLVPIKQWIHTSQLDLSDSSSLVADLLYNIIKFNFSGLEDKRAIFTGYESIKRYTIGNEMFLQLAKDGFALPVSMSYGLFLEETDTLELRALPRSEGLHRGCEVLVLRLDSPNELKENIREWSSKFMNSKASQKQQMLSPETMQKVDLAGRASPRYQANDSWISKKRNAPLSSISQYANMPENYALNTKKSKISNENDTIFKANFQQNKYESLHAKQISASDLSLHQEFVSASIVQQPELNSLLTSQSKNSTPSESDSSSSESSSSVSDSSDLSSTSDSSSGDESSDTARQSSSDTISSNNVSVSVSLNTANEFSFPQGTFKAENEAVESEVAPSSSTPPTVEEISYLHYDEPSQYYFSSPSKLSSETTKVHRGCENTEKPSEEGKNFTTPLSDSVESENTWSNTLRSSVEDDNTGVSDDNKKSKLNAEFDGHVNNISVRPPGSGSSATKARNLRRKKARILKRLMQESNDTFSANESTVVANVPDSYLTKNDEEDSASLASLKVAPKYVSHPVSLSSNSFHTEFPIGSLMRFTVMDLNPVTCTPEISEKTGRVVDCSEEKVKIQLDLGDRLDLKFDVNGEVIRNRYGTTPDEELIEGIATYEWSSLSNVHKLELTN.

A phosphoserine mark is found at Ser-148 and Ser-162. Disordered regions lie at residues 253–309 (LTSQ…ISSN) and 382–433 (RGCE…NKKS). Residues 260-292 (STPSESDSSSSESSSSVSDSSDLSSTSDSSSGD) are compositionally biased toward low complexity. The segment covering 382 to 395 (RGCENTEKPSEEGK) has biased composition (basic and acidic residues). Residues 396–417 (NFTTPLSDSVESENTWSNTLRS) are compositionally biased toward polar residues.

It belongs to the coilin family. As to quaternary structure, interacts with tgs1; both proteins are required to maintain Cajal body integrity. Interacts with U2 and U5 snRNAs.

Its subcellular location is the cytoplasm. The protein resides in the nucleus. It is found in the cajal body. In terms of biological role, component of nuclear coiled bodies, also known as Cajal bodies or CBs, which are involved in the modification and assembly of nucleoplasmic snRNPs. Required for proper pre-mRNA splicing. The protein is Coilin of Schizosaccharomyces pombe (strain 972 / ATCC 24843) (Fission yeast).